The sequence spans 838 residues: U1 SNP1-associating protein 1 (838 aa).

Topologically, residues 1 to 536 (MSEYLAQTPC…VRPLRNSFPL (536 aa)) are cytoplasmic. Positions 31-240 (HPLSTVGRLL…DFAPAHNSFF (210 aa)) are required for ERAD-L function. The Ubiquitin-like domain maps to 259–318 (ERFVLEFISDATLSITQMNVKPDTTVKQVKDFICSVYTHSLNLRRNDIKLIYKGQLLHEN). Residues 319–418 (NFAGNSSKIS…VPTDELYRKC (100 aa)) form an important for HRD1 oligomer formation region. The interaction with HRD1 stretch occupies residues 345–535 (QEYTESGPGF…VVRPLRNSFP (191 aa)). Phosphoserine is present on residues Ser374, Ser376, and Ser379. Positions 437–490 (SSYLSVIKGDYGEIKIPISSNDYRINGDNILLSPSAIEQLESALNFKIERPRDS) are required for ERAD-L function and HRD1 oligomer formation. Residues 537-559 (LLVLIRTFYLIGYNSLVPFFIIL) traverse the membrane as a helical segment. Over 560–563 (EFGS) the chain is Extracellular. A helical transmembrane segment spans residues 564–583 (FLPWKYIILLSLLFIFRTVW). At 584–838 (NTQEVWNLWR…QPHLYIPDED (255 aa)) the chain is on the cytoplasmic side. The interval 584 to 838 (NTQEVWNLWR…QPHLYIPDED (255 aa)) is interaction with DER1. Positions 795 to 838 (ARDREQPAPSAQQQENEDEALIIPDEEEPTATGAQPHLYIPDED) are disordered. A compositionally biased stretch (acidic residues) spans 809–823 (ENEDEALIIPDEEEP).

As to quaternary structure, component of the HRD1 ubiquitin ligase complex which contains the E3 ligase HRD1, its cofactors HRD3, USA1 and DER1, substrate recruiting factor YOS9 and CDC48-binding protein UBX2. Within the complex, interacts directly with HRD1 (via N-terminus) and DER1 (via C-terminus) and indirectly with HRD3. In ERAD-L, HRD3 and YOS9 jointly bind misfolded glycoproteins in the endoplasmic reticulum (ER) lumen. Movement of ERAD-L substrates through the ER membrane is facilitated by HRD1 and DER1 which have lateral gates facing each other and which distort the membrane region between the lateral gates, making it much thinner than a normal phospholipid bilayer. Substrates insert into the membrane as a hairpin loop with one strand interacting with DER1 and the other with HRD1. The HRD1 complex interacts with the heterotrimeric CDC48-NPL4-UFD1 ATPase complex which is recruited by UBX2 via its interaction with CDC48 and which moves ubiquitinated substrates to the cytosol for targeting to the proteasome.

It is found in the endoplasmic reticulum membrane. Scaffold protein of the endoplasmic reticulum-associated degradation (ERAD) (also known as endoplasmic reticulum quality control, ERQC) pathway involved in ubiquitin-dependent degradation of misfolded endoplasmic reticulum proteins. Component of the HRD1 ubiquitin ligase complex, which is part of the ERAD-L and ERAD-M pathways responsible for the rapid degradation of soluble lumenal and membrane proteins with misfolded lumenal domains (ERAD-L), or ER-membrane proteins with misfolded transmembrane domains (ERAD-M). Has multiple functions in ERAD including recruitment of DER1 to the HRD1 ubiquitin ligase, and regulation of HRD1 activity. Involved in oligomerization of HRD1 and in HRD1 autoubiquitination and degradation. The sequence is that of U1 SNP1-associating protein 1 (USA1) from Saccharomyces cerevisiae (strain ATCC 204508 / S288c) (Baker's yeast).